Reading from the N-terminus, the 330-residue chain is Ferric enterobactin transport system permease protein FepG (330 aa).

At 1–7 (MIYVSRR) the chain is on the periplasmic side. Residues 8-28 (LLITCLLLVSACVVAGIWGLR) form a helical membrane-spanning segment. The Cytoplasmic portion of the chain corresponds to 29 to 62 (SGAVTLETSQVFAALMGDAPRSMTMVVTEWRLPR). A helical membrane pass occupies residues 63 to 83 (VLMALLIGAALGVSGAIFQSL). Over 84–92 (MRNPLGSPD) the chain is Periplasmic. Residues 93 to 113 (VMGFNTGAWSGVLVAMVLFGQ) form a helical membrane-spanning segment. The Cytoplasmic segment spans residues 114-117 (DLTA). The helical transmembrane segment at 118 to 138 (IALSAMVGGIVTSLLVWLLAW) threads the bilayer. The Periplasmic portion of the chain corresponds to 139–146 (RNGIDTFR). The helical transmembrane segment at 147–167 (LIIIGIGVRAMLVAFNTWLLL) threads the bilayer. Residues 168-190 (KASLETALTAGLWNAGSLNGLTW) lie on the Cytoplasmic side of the membrane. A helical transmembrane segment spans residues 191-211 (AKTSPSAPIIILMLIAAALLV). Topologically, residues 212–235 (RRMRLLEMGDDTACALGVSVERSR) are periplasmic. Residues 236–256 (LLMMLVAVVLTAAATALAGPI) traverse the membrane as a helical segment. The Cytoplasmic segment spans residues 257–275 (SFIALVAPHIARRISGTAR). The chain crosses the membrane as a helical span at residues 276-296 (WGLTQAALCGALLLLAADLCA). The Periplasmic portion of the chain corresponds to 297–303 (QQLFMPY). The helical transmembrane segment at 304-324 (QLPVGVVTVSLGGIYLIVLLI) threads the bilayer. At 325–330 (QESRKK) the chain is on the cytoplasmic side.

It belongs to the binding-protein-dependent transport system permease family. FecCD subfamily. As to quaternary structure, the complex is composed of two ATP-binding proteins (FepC), two transmembrane proteins (FepD and FepG) and a solute-binding protein (FepB).

The protein localises to the cell inner membrane. Its function is as follows. Part of the ABC transporter complex FepBDGC involved in ferric enterobactin uptake. Responsible for the translocation of the substrate across the membrane. The protein is Ferric enterobactin transport system permease protein FepG (fepG) of Escherichia coli (strain K12).